A 229-amino-acid chain; its full sequence is Potassium/proton antiporter CemA (229 aa).

The next 4 helical transmembrane spans lie at 7-27, 107-127, 154-174, and 189-209; these read FNPLLYLTSIVFLSWSISFSF, ILNFLTNIISFAILSVFYILG, ILLLTDLCIGFHSPHGWELMI, and IISGLVSTFPVILDTIFKYLI.

This sequence belongs to the CemA family.

It is found in the plastid. It localises to the chloroplast inner membrane. It carries out the reaction K(+)(in) + H(+)(out) = K(+)(out) + H(+)(in). Its function is as follows. Contributes to K(+)/H(+) antiport activity by supporting proton efflux to control proton extrusion and homeostasis in chloroplasts in a light-dependent manner to modulate photosynthesis. Prevents excessive induction of non-photochemical quenching (NPQ) under continuous-light conditions. Indirectly promotes efficient inorganic carbon uptake into chloroplasts. This Ranunculus macranthus (Large buttercup) protein is Potassium/proton antiporter CemA.